Reading from the N-terminus, the 202-residue chain is MEHYLSLLLKAIFVENMALAFFLGMCTFLAISKKIEAATGLGIAVVVVLTVTVPVNNLLYNTILREGALDWAGLPNVDLSFLGLLTYIGVIAAIVQIMEMVLDKYIPALYAALGVFLPLITVNCAILGASLFMVERDYTFGESLVYGFGAGVGWALAIIALAGIREKLKYSDVPNGLRGLGITFITVGLMSLGFMSFSGISL.

A run of 6 helical transmembrane segments spans residues 11–31, 35–55, 81–101, 114–134, 144–164, and 180–200; these read AIFV…FLAI, IEAA…TVPV, FLGL…MEMV, GVFL…LFMV, LVYG…LAGI, and LGIT…FSGI.

This sequence belongs to the NqrDE/RnfAE family. As to quaternary structure, composed of six subunits; NqrA, NqrB, NqrC, NqrD, NqrE and NqrF.

Its subcellular location is the cell inner membrane. The enzyme catalyses a ubiquinone + n Na(+)(in) + NADH + H(+) = a ubiquinol + n Na(+)(out) + NAD(+). In terms of biological role, NQR complex catalyzes the reduction of ubiquinone-1 to ubiquinol by two successive reactions, coupled with the transport of Na(+) ions from the cytoplasm to the periplasm. NqrA to NqrE are probably involved in the second step, the conversion of ubisemiquinone to ubiquinol. This Marinobacter nauticus (strain ATCC 700491 / DSM 11845 / VT8) (Marinobacter aquaeolei) protein is Na(+)-translocating NADH-quinone reductase subunit E.